Consider the following 144-residue polypeptide: UPF0306 protein ESA_03544 (144 aa).

Belongs to the UPF0306 family.

This is UPF0306 protein ESA_03544 from Cronobacter sakazakii (strain ATCC BAA-894) (Enterobacter sakazakii).